A 493-amino-acid polypeptide reads, in one-letter code: Glutamate--tRNA ligase (493 aa).

The short motif at 10–20 (PSPTGDPHVGT) is the 'HIGH' region element. Residues 251 to 255 (KLSKR) carry the 'KMSKS' region motif. ATP is bound at residue K254.

Belongs to the class-I aminoacyl-tRNA synthetase family. Glutamate--tRNA ligase type 1 subfamily. As to quaternary structure, monomer.

It is found in the cytoplasm. It catalyses the reaction tRNA(Glu) + L-glutamate + ATP = L-glutamyl-tRNA(Glu) + AMP + diphosphate. Its function is as follows. Catalyzes the attachment of glutamate to tRNA(Glu) in a two-step reaction: glutamate is first activated by ATP to form Glu-AMP and then transferred to the acceptor end of tRNA(Glu). The chain is Glutamate--tRNA ligase from Pseudomonas putida (strain ATCC 47054 / DSM 6125 / CFBP 8728 / NCIMB 11950 / KT2440).